A 648-amino-acid polypeptide reads, in one-letter code: Threonine--tRNA ligase (648 aa).

The TGS domain maps to 1-61 (MIKITLPDGS…TTDGSLVLYT (61 aa)). Positions 240–539 (DHRKLGKELE…LLEHTAGNFP (300 aa)) are catalytic. Positions 335, 386, and 516 each coordinate Zn(2+).

Belongs to the class-II aminoacyl-tRNA synthetase family. Homodimer. The cofactor is Zn(2+).

It is found in the cytoplasm. It catalyses the reaction tRNA(Thr) + L-threonine + ATP = L-threonyl-tRNA(Thr) + AMP + diphosphate + H(+). Functionally, catalyzes the attachment of threonine to tRNA(Thr) in a two-step reaction: L-threonine is first activated by ATP to form Thr-AMP and then transferred to the acceptor end of tRNA(Thr). Also edits incorrectly charged L-seryl-tRNA(Thr). In Flavobacterium psychrophilum (strain ATCC 49511 / DSM 21280 / CIP 103535 / JIP02/86), this protein is Threonine--tRNA ligase.